Reading from the N-terminus, the 256-residue chain is Thiazole synthase (256 aa).

The active-site Schiff-base intermediate with DXP is K96. 1-deoxy-D-xylulose 5-phosphate-binding positions include G157, 184-185 (AG), and 206-207 (NT).

The protein belongs to the ThiG family. As to quaternary structure, homotetramer. Forms heterodimers with either ThiH or ThiS.

The protein resides in the cytoplasm. The enzyme catalyses [ThiS sulfur-carrier protein]-C-terminal-Gly-aminoethanethioate + 2-iminoacetate + 1-deoxy-D-xylulose 5-phosphate = [ThiS sulfur-carrier protein]-C-terminal Gly-Gly + 2-[(2R,5Z)-2-carboxy-4-methylthiazol-5(2H)-ylidene]ethyl phosphate + 2 H2O + H(+). Its pathway is cofactor biosynthesis; thiamine diphosphate biosynthesis. Functionally, catalyzes the rearrangement of 1-deoxy-D-xylulose 5-phosphate (DXP) to produce the thiazole phosphate moiety of thiamine. Sulfur is provided by the thiocarboxylate moiety of the carrier protein ThiS. In vitro, sulfur can be provided by H(2)S. The protein is Thiazole synthase of Brucella melitensis biotype 2 (strain ATCC 23457).